The primary structure comprises 215 residues: 23.2 kDa heat shock protein (215 aa).

Positions 1–27 (MASMRTAAAAAMLACIAVVLASTAADG) are cleaved as a signal peptide. The region spanning 69–189 (DVAMLSMARV…GPRVVGIASA (121 aa)) is the sHSP domain. The disordered stretch occupies residues 183 to 215 (VVGIASAGGDDGGKKSIGGAGEGQNQQAKKVEL). The span at 205-215 (GQNQQAKKVEL) shows a compositional bias: polar residues.

The protein belongs to the small heat shock protein (HSP20) family. As to quaternary structure, may form oligomeric structures.

The protein localises to the endoplasmic reticulum. This Oryza sativa subsp. japonica (Rice) protein is 23.2 kDa heat shock protein (HSP23.2).